We begin with the raw amino-acid sequence, 884 residues long: Probable ribonuclease ZC3H12C (884 aa).

A disordered region spans residues 66–108 (KPTMDTVNSGKEGKGVSEENVSSGDSEGSTSSDHESEQLSSLS). The segment covering 87 to 96 (SSGDSEGSTS) has biased composition (low complexity). The residue at position 231 (Ser-231) is a Phosphoserine. Residues 246–401 (LRPVVIDGSN…LGRHGPSLDN (156 aa)) form the RNase NYN domain. The C3H1-type zinc finger occupies 411-436 (EHKKQPCPYGKKCTYGHKCKYYHPER). Over residues 456-478 (AAKTTNEGGLVKSNSVPCSTKAD) the composition is skewed to polar residues. Disordered stretches follow at residues 456–548 (AAKT…SGVH), 716–739 (VGAR…KAPH), and 755–776 (SRLY…EGLG). The segment covering 500–516 (VYQDIEEKLPTKNKLET) has biased composition (basic and acidic residues). Polar residues predominate over residues 518–543 (SVPSLVSIPATSTAKPQSTTPLSNGL).

Belongs to the ZC3H12 family. Requires Mg(2+) as cofactor.

May function as RNase and regulate the levels of target RNA species. This Mus musculus (Mouse) protein is Probable ribonuclease ZC3H12C (Zc3h12c).